Here is a 660-residue protein sequence, read N- to C-terminus: Bifunctional polymyxin resistance protein ArnA (660 aa).

Residues 1–304 (MKAVVFAYHD…TLGLVAGARL (304 aa)) form a formyltransferase ArnAFT region. Histidine 104 (proton donor; for formyltransferase activity) is an active-site residue. (6R)-10-formyltetrahydrofolate is bound by residues arginine 114 and 136-140 (VKRAD). The segment at 314 to 660 (RRTRVLILGV…QSVEPGDAEE (347 aa)) is dehydrogenase ArnADH. NAD(+) contacts are provided by residues aspartate 347 and 368–369 (DI). Residues alanine 393, tyrosine 398, and 432–433 (TS) each bind UDP-alpha-D-glucuronate. Catalysis depends on glutamate 434, which acts as the Proton acceptor; for decarboxylase activity. UDP-alpha-D-glucuronate contacts are provided by residues arginine 460, asparagine 492, 526-535 (KLIDGGRQKR), and tyrosine 613. Arginine 619 (proton donor; for decarboxylase activity) is an active-site residue.

It in the N-terminal section; belongs to the Fmt family. UDP-L-Ara4N formyltransferase subfamily. In the C-terminal section; belongs to the NAD(P)-dependent epimerase/dehydratase family. UDP-glucuronic acid decarboxylase subfamily. In terms of assembly, homohexamer, formed by a dimer of trimers.

It carries out the reaction UDP-alpha-D-glucuronate + NAD(+) = UDP-beta-L-threo-pentopyranos-4-ulose + CO2 + NADH. The enzyme catalyses UDP-4-amino-4-deoxy-beta-L-arabinose + (6R)-10-formyltetrahydrofolate = UDP-4-deoxy-4-formamido-beta-L-arabinose + (6S)-5,6,7,8-tetrahydrofolate + H(+). It participates in nucleotide-sugar biosynthesis; UDP-4-deoxy-4-formamido-beta-L-arabinose biosynthesis; UDP-4-deoxy-4-formamido-beta-L-arabinose from UDP-alpha-D-glucuronate: step 1/3. Its pathway is nucleotide-sugar biosynthesis; UDP-4-deoxy-4-formamido-beta-L-arabinose biosynthesis; UDP-4-deoxy-4-formamido-beta-L-arabinose from UDP-alpha-D-glucuronate: step 3/3. The protein operates within bacterial outer membrane biogenesis; lipopolysaccharide biosynthesis. In terms of biological role, bifunctional enzyme that catalyzes the oxidative decarboxylation of UDP-glucuronic acid (UDP-GlcUA) to UDP-4-keto-arabinose (UDP-Ara4O) and the addition of a formyl group to UDP-4-amino-4-deoxy-L-arabinose (UDP-L-Ara4N) to form UDP-L-4-formamido-arabinose (UDP-L-Ara4FN). The modified arabinose is attached to lipid A and is required for resistance to polymyxin and cationic antimicrobial peptides. This is Bifunctional polymyxin resistance protein ArnA from Erwinia tasmaniensis (strain DSM 17950 / CFBP 7177 / CIP 109463 / NCPPB 4357 / Et1/99).